We begin with the raw amino-acid sequence, 283 residues long: MNAPRLLVDIGNTRLKWAWCEAGAPLPASTGTTVLPTPWQHAGAVAHAADGALRTLAAELRALRAGGPMPSVWISNVAGPVIAAAVDAALADAFGGCAPVQWVRSAAAHGDLVNGYREPTQLGVDRWVGAVGAHRWLPRDTLLVVTAGTATTLDIVTVAAEGGARFEGGLILPGLALMLGTLARNTAQLPALDVGEAGSVAGAQRRWADNTHDAIAAGCLAAQAGAIERTWRALGERGDAARPPRCLLSGGARGALAGALAVPFEMHDNLVLLGLHAMAMADA.

An ATP-binding site is contributed by 9–16 (DIGNTRLK). Substrate contacts are provided by residues tyrosine 116 and 123–126 (GVDR). Aspartate 125 functions as the Proton acceptor in the catalytic mechanism. Threonine 149 is a binding site for ATP. Threonine 211 contributes to the substrate binding site.

Belongs to the type III pantothenate kinase family. As to quaternary structure, homodimer. It depends on NH4(+) as a cofactor. K(+) is required as a cofactor.

The protein localises to the cytoplasm. It carries out the reaction (R)-pantothenate + ATP = (R)-4'-phosphopantothenate + ADP + H(+). The protein operates within cofactor biosynthesis; coenzyme A biosynthesis; CoA from (R)-pantothenate: step 1/5. Catalyzes the phosphorylation of pantothenate (Pan), the first step in CoA biosynthesis. In Cupriavidus taiwanensis (strain DSM 17343 / BCRC 17206 / CCUG 44338 / CIP 107171 / LMG 19424 / R1) (Ralstonia taiwanensis (strain LMG 19424)), this protein is Type III pantothenate kinase.